The chain runs to 53 residues: Zinc metalloproteinase-disintegrin-like alborhagin (53 aa).

It belongs to the venom metalloproteinase (M12B) family. P-III subfamily. P-IIIb sub-subfamily. In terms of assembly, monomer. The cofactor is Zn(2+). Post-translationally, contains numerous disulfide bonds. Glycosylated. In terms of tissue distribution, expressed by the venom gland.

It localises to the secreted. With respect to regulation, alborhagin-induced platelet aggregation, but not shape change, is inhibited by EDTA, suggesting that the platelet activation (shape change) is independent of divalent cation or metalloproteinase activity. In terms of biological role, induces platelet activation and glycoprotein VI (GP6)-dependent platelet aggregation. Induces ectodomain cleavage of GP6 by activating endogenous platelet metalloproteinases (probably ADAM10). Has fibrinogenolytic activity against the alpha chain of fibrinogen (FGA). Recognizes distinct binding sites as convulxin, since alborhagin has minimal effect on convulxin binding to GPVI-expressing cells. Disintegrin alborhagin-C: 42 kDa fragment of alborhagin autoproteolysed that does not show platelet activation. The polypeptide is Zinc metalloproteinase-disintegrin-like alborhagin (Trimeresurus albolabris (White-lipped pit viper)).